Consider the following 187-residue polypeptide: Elongation factor P (187 aa).

This sequence belongs to the elongation factor P family.

Its subcellular location is the cytoplasm. Its pathway is protein biosynthesis; polypeptide chain elongation. Its function is as follows. Involved in peptide bond synthesis. Stimulates efficient translation and peptide-bond synthesis on native or reconstituted 70S ribosomes in vitro. Probably functions indirectly by altering the affinity of the ribosome for aminoacyl-tRNA, thus increasing their reactivity as acceptors for peptidyl transferase. The sequence is that of Elongation factor P from Prochlorococcus marinus (strain NATL2A).